The sequence spans 103 residues: Histone H4 (103 aa).

Residues 1–14 (MSGRGKGGKGLGKG) are compositionally biased toward gly residues. The disordered stretch occupies residues 1–20 (MSGRGKGGKGLGKGGAKRHR). Residue lysine 6 is modified to N6-acetyl-N6-methyllysine; alternate. Residues lysine 6, lysine 9, and lysine 13 each carry the N6-methyllysine; alternate modification. Residue lysine 13 is modified to N6-acetyl-N6-methyllysine; alternate. A DNA-binding region spans residues 17–21 (KRHRK). Lysine 92 carries the N6-glutaryllysine modification.

The protein belongs to the histone H4 family. In terms of assembly, the nucleosome is a histone octamer containing two molecules each of H2A, H2B, H3 and H4 assembled in one H3-H4 heterotetramer and two H2A-H2B heterodimers. The octamer wraps approximately 147 bp of DNA. Glutarylation at Lys-92 (H4K91glu) destabilizes nucleosomes by promoting dissociation of the H2A-H2B dimers from nucleosomes.

Its subcellular location is the nucleus. The protein localises to the chromosome. In terms of biological role, core component of nucleosome. Nucleosomes wrap and compact DNA into chromatin, limiting DNA accessibility to the cellular machineries which require DNA as a template. Histones thereby play a central role in transcription regulation, DNA repair, DNA replication and chromosomal stability. DNA accessibility is regulated via a complex set of post-translational modifications of histones, also called histone code, and nucleosome remodeling. The protein is Histone H4 (HHF1) of Candida glabrata (strain ATCC 2001 / BCRC 20586 / JCM 3761 / NBRC 0622 / NRRL Y-65 / CBS 138) (Yeast).